The chain runs to 159 residues: 2-C-methyl-D-erythritol 2,4-cyclodiphosphate synthase (159 aa).

A divalent metal cation is bound by residues Asp8 and His10. 4-CDP-2-C-methyl-D-erythritol 2-phosphate-binding positions include 8-10 (DVH) and 34-35 (HS). His42 contacts a divalent metal cation. 4-CDP-2-C-methyl-D-erythritol 2-phosphate-binding positions include 56–58 (DIG), 61–65 (FPDTD), 100–106 (AQAPKML), 132–135 (TTTE), Phe139, and Arg142.

This sequence belongs to the IspF family. Homotrimer. It depends on a divalent metal cation as a cofactor.

It catalyses the reaction 4-CDP-2-C-methyl-D-erythritol 2-phosphate = 2-C-methyl-D-erythritol 2,4-cyclic diphosphate + CMP. Its pathway is isoprenoid biosynthesis; isopentenyl diphosphate biosynthesis via DXP pathway; isopentenyl diphosphate from 1-deoxy-D-xylulose 5-phosphate: step 4/6. In terms of biological role, involved in the biosynthesis of isopentenyl diphosphate (IPP) and dimethylallyl diphosphate (DMAPP), two major building blocks of isoprenoid compounds. Catalyzes the conversion of 4-diphosphocytidyl-2-C-methyl-D-erythritol 2-phosphate (CDP-ME2P) to 2-C-methyl-D-erythritol 2,4-cyclodiphosphate (ME-CPP) with a corresponding release of cytidine 5-monophosphate (CMP). This Salmonella choleraesuis (strain SC-B67) protein is 2-C-methyl-D-erythritol 2,4-cyclodiphosphate synthase.